Reading from the N-terminus, the 249-residue chain is Ribonuclease HII (249 aa).

In terms of domain architecture, RNase H type-2 spans 30–221 (GPVAGVDEVG…VRRLVMDGEP (192 aa)). Residues aspartate 36, glutamate 37, and aspartate 130 each contribute to the a divalent metal cation site.

It belongs to the RNase HII family. Requires Mn(2+) as cofactor. It depends on Mg(2+) as a cofactor.

It localises to the cytoplasm. It catalyses the reaction Endonucleolytic cleavage to 5'-phosphomonoester.. Its function is as follows. Endonuclease that specifically degrades the RNA of RNA-DNA hybrids. In Mycolicibacterium vanbaalenii (strain DSM 7251 / JCM 13017 / BCRC 16820 / KCTC 9966 / NRRL B-24157 / PYR-1) (Mycobacterium vanbaalenii), this protein is Ribonuclease HII.